A 379-amino-acid polypeptide reads, in one-letter code: Queuine tRNA-ribosyltransferase (379 aa).

The active-site Proton acceptor is the D94. Substrate is bound by residues 94–98 (DSGGF), D148, Q191, and G218. An RNA binding region spans residues 249–255 (GVGSPDS). The active-site Nucleophile is D268. The interval 273–277 (TRIAR) is RNA binding; important for wobble base 34 recognition. C306, C308, C311, and H337 together coordinate Zn(2+).

This sequence belongs to the queuine tRNA-ribosyltransferase family. Homodimer. Within each dimer, one monomer is responsible for RNA recognition and catalysis, while the other monomer binds to the replacement base PreQ1. Zn(2+) is required as a cofactor.

It carries out the reaction 7-aminomethyl-7-carbaguanine + guanosine(34) in tRNA = 7-aminomethyl-7-carbaguanosine(34) in tRNA + guanine. Its pathway is tRNA modification; tRNA-queuosine biosynthesis. Its function is as follows. Catalyzes the base-exchange of a guanine (G) residue with the queuine precursor 7-aminomethyl-7-deazaguanine (PreQ1) at position 34 (anticodon wobble position) in tRNAs with GU(N) anticodons (tRNA-Asp, -Asn, -His and -Tyr). Catalysis occurs through a double-displacement mechanism. The nucleophile active site attacks the C1' of nucleotide 34 to detach the guanine base from the RNA, forming a covalent enzyme-RNA intermediate. The proton acceptor active site deprotonates the incoming PreQ1, allowing a nucleophilic attack on the C1' of the ribose to form the product. After dissociation, two additional enzymatic reactions on the tRNA convert PreQ1 to queuine (Q), resulting in the hypermodified nucleoside queuosine (7-(((4,5-cis-dihydroxy-2-cyclopenten-1-yl)amino)methyl)-7-deazaguanosine). The chain is Queuine tRNA-ribosyltransferase from Bacillus cytotoxicus (strain DSM 22905 / CIP 110041 / 391-98 / NVH 391-98).